The primary structure comprises 101 residues: Protein mes1 (101 aa).

The segment covering 1 to 19 (MVNTDNKENEPPNMEKAHM) has biased composition (basic and acidic residues). The disordered stretch occupies residues 1 to 101 (MVNTDNKENE…RSPNPLLSMR (101 aa)).

In terms of assembly, interacts with slp1.

The protein resides in the cytoplasm. It is found in the nucleus. Specifically required for meiosis II (MII). Binds to slp1, an activator of the anapahase promoting complex/cyclcosome (APC/C), and counteracts its function in promoting proteolysis of cdc13. By suppressing the degradation of cdc13 at anaphase I this protein may help maintain a sufficient level of cdc2 kinase activity to complete MII. This is Protein mes1 (mes1) from Schizosaccharomyces pombe (strain 972 / ATCC 24843) (Fission yeast).